The sequence spans 273 residues: NADPH-dependent 7-cyano-7-deazaguanine reductase (273 aa).

81-83 (VES) contacts substrate. Residue 83–84 (SK) coordinates NADPH. Cys179 serves as the catalytic Thioimide intermediate. Asp186 acts as the Proton donor in catalysis. Residue 218–219 (AE) coordinates substrate. NADPH is bound at residue 247–248 (RG).

This sequence belongs to the GTP cyclohydrolase I family. QueF type 2 subfamily. As to quaternary structure, homodimer.

It localises to the cytoplasm. The enzyme catalyses 7-aminomethyl-7-carbaguanine + 2 NADP(+) = 7-cyano-7-deazaguanine + 2 NADPH + 3 H(+). It participates in tRNA modification; tRNA-queuosine biosynthesis. In terms of biological role, catalyzes the NADPH-dependent reduction of 7-cyano-7-deazaguanine (preQ0) to 7-aminomethyl-7-deazaguanine (preQ1). The polypeptide is NADPH-dependent 7-cyano-7-deazaguanine reductase (Rickettsia bellii (strain OSU 85-389)).